An 80-amino-acid chain; its full sequence is Conotoxin PnMKLT1-0121 (80 aa).

The first 22 residues, 1–22 (MKLTCMMIVAVLFLTAWTFATA), serve as a signal peptide directing secretion. Positions 23-49 (DDPRNRLENFFSKTQHEMKNPEASKLN) are excised as a propeptide. Intrachain disulfides connect cysteine 52/cysteine 67, cysteine 59/cysteine 71, and cysteine 66/cysteine 75.

This sequence belongs to the conotoxin O1 superfamily. As to expression, expressed by the venom duct.

The protein resides in the secreted. This Conus pennaceus (Feathered cone) protein is Conotoxin PnMKLT1-0121.